Here is a 150-residue protein sequence, read N- to C-terminus: Lipoprotein signal peptidase (150 aa).

A run of 3 helical transmembrane segments spans residues 8–28, 58–78, and 81–101; these read FYAL…LAHA, GFSW…GWFL, and TTGS…NVFD. Active-site residues include Asp116 and Asp132. Residues 126 to 146 traverse the membrane as a helical segment; sequence VVFNIADLFILAGVFGTFLFL.

The protein belongs to the peptidase A8 family.

The protein localises to the cell membrane. It catalyses the reaction Release of signal peptides from bacterial membrane prolipoproteins. Hydrolyzes -Xaa-Yaa-Zaa-|-(S,diacylglyceryl)Cys-, in which Xaa is hydrophobic (preferably Leu), and Yaa (Ala or Ser) and Zaa (Gly or Ala) have small, neutral side chains.. Its pathway is protein modification; lipoprotein biosynthesis (signal peptide cleavage). This protein specifically catalyzes the removal of signal peptides from prolipoproteins. This Tropheryma whipplei (strain TW08/27) (Whipple's bacillus) protein is Lipoprotein signal peptidase.